The following is a 153-amino-acid chain: ORM1-like protein 3 (153 aa).

The tract at residues 1 to 17 (MNVGTAHSEVNPNTRVM) is important for ceramide level-sensing. Residues 1–21 (MNVGTAHSEVNPNTRVMNSRG) are Cytoplasmic-facing. The next 2 membrane-spanning stretches (helical) occupy residues 22–42 (IWLS…SIPF) and 43–63 (VSVP…MYIF). Residues 64-94 (LHTVKGTPFETPDQGKARLLTHWEQMDYGVQ) lie on the Cytoplasmic side of the membrane. Residues 95-117 (FTASRKFLTITPIVLYFLTSFYT) traverse the membrane as a helical segment. Over 118–121 (KYDQ) the chain is Extracellular. The helical transmembrane segment at 122-142 (IHFVLNTVSLMSVLIPKLPQL) threads the bilayer. A Hydroxyproline modification is found at Pro-137. Residues 143 to 153 (HGVRIFGINKY) lie on the Cytoplasmic side of the membrane.

Belongs to the ORM family. Ceramide-sensitive subunit of the serine palmitoyltransferase (SPT) complex, which is also composed of SPTLC1, SPTLC2/3 and SPTSSA/B. Post-translationally, when hydroxylated at Pro-137, ubiquitinated via 'Lys-48'-linkage, leading to proteasomal degradation. In endothelial cells, ORMDL3 proteasomal degradation is controlled by the sphingosine 1-phosphate receptor signaling pathway.

It is found in the endoplasmic reticulum membrane. Plays an essential role in the homeostatic regulation of sphingolipid de novo biosynthesis by modulating the activity of the serine palmitoyltransferase (SPT) in response to ceramide levels. When complexed to SPT, the binding of ceramides to its N-terminus stabilizes a conformation that block SPT substrate entry, hence preventing SPT catalytic activity. Through this mechanism, maintains ceramide levels at sufficient concentrations for the production of complex sphingolipids, but which prevents the accumulation of ceramides to levels that trigger apoptosis. The sequence is that of ORM1-like protein 3 (ORMDL3) from Ailuropoda melanoleuca (Giant panda).